Reading from the N-terminus, the 415-residue chain is Actin-like protein 7B (415 aa).

Positions 1–31 are disordered; sequence MATRNSPMPLGTAQGDPGEAGTRPGPDASLR. At Ser6 the chain carries Phosphoserine.

This sequence belongs to the actin family. As to expression, detected only in the testis and, to a lesser extent, in the prostate.

The protein localises to the cytoplasm. Its subcellular location is the cytoskeleton. This Homo sapiens (Human) protein is Actin-like protein 7B (ACTL7B).